The chain runs to 486 residues: Protein nucleotidyltransferase YdiU (486 aa).

Residues G90, G92, R93, K113, D125, G126, R176, and R183 each contribute to the ATP site. D252 (proton acceptor) is an active-site residue. Positions 253 and 262 each coordinate Mg(2+). ATP is bound at residue D262.

The protein belongs to the SELO family. Mg(2+) serves as cofactor. Mn(2+) is required as a cofactor.

The catalysed reaction is L-seryl-[protein] + ATP = 3-O-(5'-adenylyl)-L-seryl-[protein] + diphosphate. It carries out the reaction L-threonyl-[protein] + ATP = 3-O-(5'-adenylyl)-L-threonyl-[protein] + diphosphate. The enzyme catalyses L-tyrosyl-[protein] + ATP = O-(5'-adenylyl)-L-tyrosyl-[protein] + diphosphate. It catalyses the reaction L-histidyl-[protein] + UTP = N(tele)-(5'-uridylyl)-L-histidyl-[protein] + diphosphate. The catalysed reaction is L-seryl-[protein] + UTP = O-(5'-uridylyl)-L-seryl-[protein] + diphosphate. It carries out the reaction L-tyrosyl-[protein] + UTP = O-(5'-uridylyl)-L-tyrosyl-[protein] + diphosphate. In terms of biological role, nucleotidyltransferase involved in the post-translational modification of proteins. It can catalyze the addition of adenosine monophosphate (AMP) or uridine monophosphate (UMP) to a protein, resulting in modifications known as AMPylation and UMPylation. This chain is Protein nucleotidyltransferase YdiU, found in Stutzerimonas stutzeri (strain A1501) (Pseudomonas stutzeri).